Consider the following 120-residue polypeptide: Large ribosomal subunit protein bL19 (120 aa).

This sequence belongs to the bacterial ribosomal protein bL19 family.

In terms of biological role, this protein is located at the 30S-50S ribosomal subunit interface and may play a role in the structure and function of the aminoacyl-tRNA binding site. The sequence is that of Large ribosomal subunit protein bL19 from Crocosphaera subtropica (strain ATCC 51142 / BH68) (Cyanothece sp. (strain ATCC 51142)).